A 100-amino-acid polypeptide reads, in one-letter code: MDLAFELRKAIETGKVVIGSNETMRLARTGEAKLIIMAKNAPKEVKDDINYYAGLSSIPVYEFEGTSVELGTLLGKPFVIALMAIVEPGESKILSLAGGK.

This sequence belongs to the eukaryotic ribosomal protein eL30 family.

The sequence is that of Large ribosomal subunit protein eL30 from Thermococcus sibiricus (strain DSM 12597 / MM 739).